Consider the following 421-residue polypeptide: Gamma-glutamyl phosphate reductase (421 aa).

Belongs to the gamma-glutamyl phosphate reductase family.

Its subcellular location is the cytoplasm. The catalysed reaction is L-glutamate 5-semialdehyde + phosphate + NADP(+) = L-glutamyl 5-phosphate + NADPH + H(+). It functions in the pathway amino-acid biosynthesis; L-proline biosynthesis; L-glutamate 5-semialdehyde from L-glutamate: step 2/2. In terms of biological role, catalyzes the NADPH-dependent reduction of L-glutamate 5-phosphate into L-glutamate 5-semialdehyde and phosphate. The product spontaneously undergoes cyclization to form 1-pyrroline-5-carboxylate. The sequence is that of Gamma-glutamyl phosphate reductase from Pseudomonas aeruginosa (strain ATCC 15692 / DSM 22644 / CIP 104116 / JCM 14847 / LMG 12228 / 1C / PRS 101 / PAO1).